Reading from the N-terminus, the 405-residue chain is Glucose-1-phosphate adenylyltransferase (405 aa).

Alpha-D-glucose 1-phosphate-binding positions include Tyr99, Gly164, 179 to 180 (EK), and Ser197.

The protein belongs to the bacterial/plant glucose-1-phosphate adenylyltransferase family. Homotetramer.

The enzyme catalyses alpha-D-glucose 1-phosphate + ATP + H(+) = ADP-alpha-D-glucose + diphosphate. It functions in the pathway glycan biosynthesis; glycogen biosynthesis. Its function is as follows. Involved in the biosynthesis of ADP-glucose, a building block required for the elongation reactions to produce glycogen. Catalyzes the reaction between ATP and alpha-D-glucose 1-phosphate (G1P) to produce pyrophosphate and ADP-Glc. The sequence is that of Glucose-1-phosphate adenylyltransferase from Corynebacterium aurimucosum (strain ATCC 700975 / DSM 44827 / CIP 107346 / CN-1) (Corynebacterium nigricans).